The chain runs to 203 residues: Large ribosomal subunit protein bL25 (203 aa).

Belongs to the bacterial ribosomal protein bL25 family. CTC subfamily. Part of the 50S ribosomal subunit; part of the 5S rRNA/L5/L18/L25 subcomplex. Contacts the 5S rRNA. Binds to the 5S rRNA independently of L5 and L18.

Its function is as follows. This is one of the proteins that binds to the 5S RNA in the ribosome where it forms part of the central protuberance. This Cereibacter sphaeroides (strain ATCC 17025 / ATH 2.4.3) (Rhodobacter sphaeroides) protein is Large ribosomal subunit protein bL25.